Here is a 115-residue protein sequence, read N- to C-terminus: Large ribosomal subunit protein bL19 (115 aa).

Belongs to the bacterial ribosomal protein bL19 family.

Its function is as follows. This protein is located at the 30S-50S ribosomal subunit interface and may play a role in the structure and function of the aminoacyl-tRNA binding site. The sequence is that of Large ribosomal subunit protein bL19 from Clostridium perfringens (strain ATCC 13124 / DSM 756 / JCM 1290 / NCIMB 6125 / NCTC 8237 / Type A).